Reading from the N-terminus, the 153-residue chain is Transcriptional repressor NrdR (153 aa).

Residues 3-34 (CPYCGYEDSKVIDTRPADEGRTIKRRRECLKC) fold into a zinc finger. Residues 49–139 (ILVIKKDNRR…VYRQFKDINT (91 aa)) form the ATP-cone domain.

Belongs to the NrdR family. Requires Zn(2+) as cofactor.

Functionally, negatively regulates transcription of bacterial ribonucleotide reductase nrd genes and operons by binding to NrdR-boxes. In Caldicellulosiruptor saccharolyticus (strain ATCC 43494 / DSM 8903 / Tp8T 6331), this protein is Transcriptional repressor NrdR.